The chain runs to 142 residues: Large ribosomal subunit protein uL13 (142 aa).

It belongs to the universal ribosomal protein uL13 family. Part of the 50S ribosomal subunit.

This protein is one of the early assembly proteins of the 50S ribosomal subunit, although it is not seen to bind rRNA by itself. It is important during the early stages of 50S assembly. The chain is Large ribosomal subunit protein uL13 from Bordetella bronchiseptica (strain ATCC BAA-588 / NCTC 13252 / RB50) (Alcaligenes bronchisepticus).